The chain runs to 236 residues: Ubiquinone biosynthesis O-methyltransferase (236 aa).

Residues R39, G59, D80, and M124 each coordinate S-adenosyl-L-methionine.

It belongs to the methyltransferase superfamily. UbiG/COQ3 family.

The catalysed reaction is a 3-demethylubiquinol + S-adenosyl-L-methionine = a ubiquinol + S-adenosyl-L-homocysteine + H(+). The enzyme catalyses a 3-(all-trans-polyprenyl)benzene-1,2-diol + S-adenosyl-L-methionine = a 2-methoxy-6-(all-trans-polyprenyl)phenol + S-adenosyl-L-homocysteine + H(+). Its pathway is cofactor biosynthesis; ubiquinone biosynthesis. Functionally, O-methyltransferase that catalyzes the 2 O-methylation steps in the ubiquinone biosynthetic pathway. This Shewanella sp. (strain MR-7) protein is Ubiquinone biosynthesis O-methyltransferase.